A 989-amino-acid polypeptide reads, in one-letter code: Protease PrtH (989 aa).

Repeats lie at residues 270–323 (TPTD…KCVN) and 528–581 (SPAS…VCVD). The segment at 969-989 (PRDTPWRYGKRELPPSASGMR) is disordered.

The protein belongs to the peptidase C25 family.

Its subcellular location is the cytoplasmic vesicle. In terms of biological role, cleaves human complement component C3. May enable P.gingivalis to evade complement-mediated killing during the immune response. Plays an important role in soft tissue infections and is a virulence factor. The polypeptide is Protease PrtH (prtH) (Porphyromonas gingivalis (strain ATCC BAA-308 / W83)).